The primary structure comprises 211 residues: MRDFRLYAITGEEFHPDRSLQAVMEEAILGGVDIIQLRDKKSHKREVLEKARVLQALAKKYDIPLIINDHIDVALAVDADGIHLGQDDLPLSEARKIMGRDKIIGISTHKIEEAREAEKGGADYIGVGPIFETKSKEDVVDPVTTAYIQQVAHEISIPFVAIGGIKLHNVEQVLDAGATRICMISEIVGAEDVKGTCEVFSTILEQRGIGS.

4-amino-2-methyl-5-(diphosphooxymethyl)pyrimidine-binding positions include 36 to 40 and N68; that span reads QLRDK. Mg(2+) is bound by residues D69 and D88. Residue S107 participates in 4-amino-2-methyl-5-(diphosphooxymethyl)pyrimidine binding. 133–135 contacts 2-[(2R,5Z)-2-carboxy-4-methylthiazol-5(2H)-ylidene]ethyl phosphate; it reads TKS. K136 contributes to the 4-amino-2-methyl-5-(diphosphooxymethyl)pyrimidine binding site. 2-[(2R,5Z)-2-carboxy-4-methylthiazol-5(2H)-ylidene]ethyl phosphate is bound by residues G164 and 184–185; that span reads IS.

The protein belongs to the thiamine-phosphate synthase family. The cofactor is Mg(2+).

The enzyme catalyses 2-[(2R,5Z)-2-carboxy-4-methylthiazol-5(2H)-ylidene]ethyl phosphate + 4-amino-2-methyl-5-(diphosphooxymethyl)pyrimidine + 2 H(+) = thiamine phosphate + CO2 + diphosphate. The catalysed reaction is 2-(2-carboxy-4-methylthiazol-5-yl)ethyl phosphate + 4-amino-2-methyl-5-(diphosphooxymethyl)pyrimidine + 2 H(+) = thiamine phosphate + CO2 + diphosphate. It carries out the reaction 4-methyl-5-(2-phosphooxyethyl)-thiazole + 4-amino-2-methyl-5-(diphosphooxymethyl)pyrimidine + H(+) = thiamine phosphate + diphosphate. It participates in cofactor biosynthesis; thiamine diphosphate biosynthesis; thiamine phosphate from 4-amino-2-methyl-5-diphosphomethylpyrimidine and 4-methyl-5-(2-phosphoethyl)-thiazole: step 1/1. Condenses 4-methyl-5-(beta-hydroxyethyl)thiazole monophosphate (THZ-P) and 2-methyl-4-amino-5-hydroxymethyl pyrimidine pyrophosphate (HMP-PP) to form thiamine monophosphate (TMP). The sequence is that of Thiamine-phosphate synthase from Halalkalibacterium halodurans (strain ATCC BAA-125 / DSM 18197 / FERM 7344 / JCM 9153 / C-125) (Bacillus halodurans).